A 334-amino-acid polypeptide reads, in one-letter code: DNA-directed RNA polymerase subunit alpha (334 aa).

Residues methionine 1–lysine 231 are alpha N-terminal domain (alpha-NTD). The segment at isoleucine 245–proline 334 is alpha C-terminal domain (alpha-CTD).

It belongs to the RNA polymerase alpha chain family. Homodimer. The RNAP catalytic core consists of 2 alpha, 1 beta, 1 beta' and 1 omega subunit. When a sigma factor is associated with the core the holoenzyme is formed, which can initiate transcription.

The catalysed reaction is RNA(n) + a ribonucleoside 5'-triphosphate = RNA(n+1) + diphosphate. DNA-dependent RNA polymerase catalyzes the transcription of DNA into RNA using the four ribonucleoside triphosphates as substrates. The chain is DNA-directed RNA polymerase subunit alpha from Nitrosospira multiformis (strain ATCC 25196 / NCIMB 11849 / C 71).